Here is a 34-residue protein sequence, read N- to C-terminus: Photosystem I reaction center subunit XII (34 aa).

Residues 10–32 (VFVALVVAAHAAVLALRLSISLY) form a helical membrane-spanning segment.

The protein belongs to the PsaM family.

The protein resides in the cellular thylakoid membrane. This chain is Photosystem I reaction center subunit XII, found in Parasynechococcus marenigrum (strain WH8102).